Reading from the N-terminus, the 598-residue chain is Elongation factor 4 (598 aa).

Residues 2 to 184 (KNIRNFSIIA…EIVRCIPPPV (183 aa)) form the tr-type G domain. GTP-binding positions include 14–19 (DHGKST) and 131–134 (NKID).

It belongs to the TRAFAC class translation factor GTPase superfamily. Classic translation factor GTPase family. LepA subfamily.

It is found in the cell inner membrane. The enzyme catalyses GTP + H2O = GDP + phosphate + H(+). Its function is as follows. Required for accurate and efficient protein synthesis under certain stress conditions. May act as a fidelity factor of the translation reaction, by catalyzing a one-codon backward translocation of tRNAs on improperly translocated ribosomes. Back-translocation proceeds from a post-translocation (POST) complex to a pre-translocation (PRE) complex, thus giving elongation factor G a second chance to translocate the tRNAs correctly. Binds to ribosomes in a GTP-dependent manner. This chain is Elongation factor 4, found in Psychromonas ingrahamii (strain DSM 17664 / CCUG 51855 / 37).